The primary structure comprises 464 residues: Glutamate decarboxylase beta (464 aa).

K275 is modified (N6-(pyridoxal phosphate)lysine).

It belongs to the group II decarboxylase family. It depends on pyridoxal 5'-phosphate as a cofactor.

It catalyses the reaction L-glutamate + H(+) = 4-aminobutanoate + CO2. Converts internalized glutamate to GABA and increases the internal pH. Involved in glutamate-dependent acid resistance in gastric fluid. In Listeria innocua serovar 6a (strain ATCC BAA-680 / CLIP 11262), this protein is Glutamate decarboxylase beta (gadB).